Here is a 102-residue protein sequence, read N- to C-terminus: Outer membrane protein assembly factor BamE (102 aa).

The first 20 residues, 1 to 20 (MNNYIKALLIIICFSSCSIS), serve as a signal peptide directing secretion.

The protein belongs to the BamE family. As to quaternary structure, part of the Bam complex.

The protein localises to the cell outer membrane. Functionally, part of the outer membrane protein assembly complex, which is involved in assembly and insertion of beta-barrel proteins into the outer membrane. This chain is Outer membrane protein assembly factor BamE, found in Buchnera aphidicola subsp. Acyrthosiphon pisum (strain APS) (Acyrthosiphon pisum symbiotic bacterium).